The sequence spans 1082 residues: MATQVMGQSSGGGSLFNNSANMGMALTNDMYDLHELSKAELAAPQLIMLANVALTGEASGSCCDYLVGEERQMAELMPVGDNHFSESEGEGLEESADLKGLENMELGSLELSAVEPQPVFEASAAPEIYSANKDPAPETPVAEDKCRSSKAKPFRCKPCQYEAESEEQFVHHIRIHSAKKFFVEESAEKQAKAWESGSSPAEEGEFSKGPIRCDRCGYNTNRYDHYMAHLKHHLRAGENERIYKCIICTYTTVSEYHWRKHLRNHFPRKVYTCSKCNYFSDRKNNYVQHVRTHTGERPYKCELCPYSSSQKTHLTRHMRTHSGEKPFKCDQCNYVASNQHEVTRHARQVHNGPKPLNCPHCDYKTADRSNFKKHVELHVNPRQFNCPVCDYAASKKCNLQYHFKSKHPTCPSKTMDVSKVKLKKTKKREADLLNNAVSNEKMENEQTKTKGDVSGKKNEKPVKAVGKDASKEKKPGSSVSVVQVTTRTRKSAVAAETKAAEVKHTDGQTGNNPEKPCKAKKNKRKKDAEAHPSEEPVNEGPVTKKKKKSECKSKIGTNVPKGGGRAEERPGVKKQSASLKKGTKKTPPKTKTSKKGGKLAPKGMGQTEPSSGALAQVGVSPDPALIQAEVTGSGSSQTELPSPMDIAKSEPAQMEVSLTGPPPVEPAQMEPSPAKPPQVEAPTYPQPPQRGPAPPTGPAPPTGPAPPTEPAPPTGLAEMEPSPTEPSQKEPPPSMEPPCPEELPQAEPPPMEDCQKELPSPVEPAQIEVAQTAPTQVQEEPPPVSEPPRVKPTKRSSLRKDRAEKELSLLSEMARQEQVLMGVGLVPVRDSKLLKGNKSAQDPPAPPSPSPKGNSREETPKDQEMVSDGEGTIVFPLKKGGPEEAGESPAELAALKESARVSSSEQNSAMPEGGASHSKCQTGSSGLCDVDTEQKTDTVPMKDSAAEPVSPPTPTVDRDAGSPAVVASPPITLAENESQEIDEDEGIHSHDGSDLSDNMSEGSDDSGLHGARPTPPEATSKNGKAGLAGKVTEGEFVCIFCDRSFRKEKDYSKHLNRHLVNVYFLEEAAEEQEEQEEREEQE.

Positions 32 to 117 (DLHELSKAEL…SLELSAVEPQ (86 aa)) are interaction with SIN3A. Residues 43–57 (APQLIMLANVALTGE) are interaction with SIN3B. The interaction with ZFP90 stretch occupies residues 140 to 413 (PVAEDKCRSS…KSKHPTCPSK (274 aa)). Residues 154-176 (FRCKPCQYEAESEEQFVHHIRIH) form a C2H2-type 1 zinc finger. Positions 196–207 (SGSSPAEEGEFS) are required for binding to the neuron-restrictive silencer element. C2H2-type zinc fingers lie at residues 211–235 (IRCD…HHLR), 243–265 (YKCI…LRNH), 271–293 (YTCS…VRTH), 299–321 (YKCE…MRTH), 327–350 (FKCD…RQVH), 356–378 (LNCP…VELH), and 384–407 (FNCP…KSKH). Disordered regions lie at residues 408–809 (PTCP…ELSL) and 831–1027 (SKLL…KAGL). Over residues 440–475 (EKMENEQTKTKGDVSGKKNEKPVKAVGKDASKEKKP) the composition is skewed to basic and acidic residues. The segment covering 477–497 (SSVSVVQVTTRTRKSAVAAET) has biased composition (low complexity). Positions 581–597 (KGTKKTPPKTKTSKKGG) are enriched in basic residues. Over residues 630 to 640 (VTGSGSSQTEL) the composition is skewed to polar residues. Composition is skewed to pro residues over residues 684–713 (YPQP…PAPP) and 729–751 (KEPP…PPPM). Composition is skewed to basic and acidic residues over residues 798 to 807 (LRKDRAEKEL) and 854 to 864 (NSREETPKDQE). Over residues 900 to 909 (RVSSSEQNSA) the composition is skewed to polar residues. Serine 950 is subject to Phosphoserine. An interaction with RCOR1 region spans residues 985-1063 (EGIHSHDGSD…HLNRHLVNVY (79 aa)). The segment at 1036–1058 (FVCIFCDRSFRKEKDYSKHLNRH) adopts a C2H2-type 9 zinc-finger fold.

Isoform 1 and isoform 2 form heterodimers. Isoform 2: Forms homodimers and homooligomers; binds to the neuron-restrictive silencer element (NRSE) as monomer. Interacts with SIN3A, SIN3B and RCOR1. Interacts with CDYL. Interacts with EHMT1 and EHMT2 only in the presence of CDYL. Part of a complex containing at least CDYL, REST, WIZ, SETB1, EHMT1 and EHMT2. Interacts (via zinc-finger DNA-binding domain) with ZFP90 (via N- and C-termini); the interaction inhibits REST repressor activity. Interacts (via C2H2-type zinc finger 5) with PRICKLE1. Interacts with FBXW11 and BTRC. Interacts with USP7. In terms of processing, O-glycosylated. Post-translationally, phosphorylated; phosphorylation is required for ubiquitination. Ubiquitinated; ubiquitination is mediated by BTRC and leads to proteasomal degradation in G2 phase. Ubiquitination increases during neuronal differentiation. Deubiquitinated by USP7; leading to its stabilization and promoting the maintenance of neural progenitor cells. Expressed in the hippocampus, including quiescent neuronal progenitor (QNP) cells, transient-amplifying progenitor (TAP) cells, neuroblasts and mature neurons (at protein level). Expressed in embryonic stem cells (at protein level). Expressed in many non-neuronal tissues including the heart and liver. Abundantly expressed in osteoblastic lineage cells. Expressed in the spleen, kidney, blood cells, cortex, neocortex and in the utricle, saccule and organ of Corti of the inner ear. Isoform 2: Expressed in the cortex, neocortex and in the utricle, saccule and organ of Corti of the inner ear.

The protein resides in the nucleus. Its subcellular location is the cytoplasm. Transcriptional repressor which binds neuron-restrictive silencer element (NRSE) and represses neuronal gene transcription in non-neuronal cells. Restricts the expression of neuronal genes by associating with two distinct corepressors, SIN3A and RCOR1, which in turn recruit histone deacetylase to the promoters of REST-regulated genes. Mediates repression by recruiting the BHC complex at RE1/NRSE sites which acts by deacetylating and demethylating specific sites on histones, thereby acting as a chromatin modifier. Transcriptional repression by REST-CDYL via the recruitment of histone methyltransferase EHMT2 may be important in transformation suppression. Represses the expression of SRRM4 in non-neural cells to prevent the activation of neural-specific splicing events and to prevent production of REST isoform 2. Repressor activity may be inhibited by forming heterodimers with isoform 2, thereby preventing binding to NRSE or binding to corepressors and leading to derepression of target genes. Also maintains repression of neuronal genes in neural stem cells, and allows transcription and differentiation into neurons by dissociation from RE1/NRSE sites of target genes. Thereby is involved in maintaining the quiescent state of adult neural stem cells and preventing premature differentiation into mature neurons. Plays a role in the developmental switch in synaptic NMDA receptor composition during postnatal development, by repressing GRIN2B expression and thereby altering NMDA receptor properties from containing primarily GRIN2B to primarily GRIN2A subunits. Acts as a regulator of osteoblast differentiation. Key repressor of gene expression in hypoxia; represses genes in hypoxia by direct binding to an RE1/NRSE site on their promoter regions. May also function in stress resistance in the brain during aging; possibly by regulating expression of genes involved in cell death and in the stress response. Repressor of gene expression in the hippocampus after ischemia by directly binding to RE1/NRSE sites and recruiting SIN3A and RCOR1 to promoters of target genes, thereby promoting changes in chromatin modifications and ischemia-induced cell death. After ischemia, might play a role in repression of miR-132 expression in hippocampal neurons, thereby leading to neuronal cell death. Its function is as follows. Binds to the 3' region of the neuron-restrictive silencer element (NRSE), with lower affinity than isoform 1. Exhibits weaker repressor activity compared to isoform 1. May negatively regulate the repressor activity of isoform 1 by binding to isoform 1, thereby preventing its binding to NRSE and leading to derepression of target genes. However, in another study, does not appear to be implicated in repressor activity of a NRSE motif-containing reporter construct nor in inhibitory activity on the isoform 1 transcriptional repressor activity. Post-transcriptional inactivation of REST by SRRM4-dependent alternative splicing into isoform 2 is required in mechanosensory hair cells in the inner ear for derepression of neuronal genes, maintenance of hair cells and hearing. In Mus musculus (Mouse), this protein is RE1-silencing transcription factor (Rest).